The sequence spans 483 residues: Glutamyl-tRNA(Gln) amidotransferase subunit A (483 aa).

Residues Lys76 and Ser151 each act as charge relay system in the active site. The Acyl-ester intermediate role is filled by Ser175.

The protein belongs to the amidase family. GatA subfamily. In terms of assembly, heterotrimer of A, B and C subunits.

It catalyses the reaction L-glutamyl-tRNA(Gln) + L-glutamine + ATP + H2O = L-glutaminyl-tRNA(Gln) + L-glutamate + ADP + phosphate + H(+). In terms of biological role, allows the formation of correctly charged Gln-tRNA(Gln) through the transamidation of misacylated Glu-tRNA(Gln) in organisms which lack glutaminyl-tRNA synthetase. The reaction takes place in the presence of glutamine and ATP through an activated gamma-phospho-Glu-tRNA(Gln). The chain is Glutamyl-tRNA(Gln) amidotransferase subunit A from Azotobacter vinelandii (strain DJ / ATCC BAA-1303).